Consider the following 223-residue polypeptide: Ribonuclease T (223 aa).

The 175-residue stretch at 20 to 194 (VVIDVETAGF…YDTEQTALLF (175 aa)) folds into the Exonuclease domain. Asp23, Glu25, His181, and Asp186 together coordinate Mg(2+). The active-site Proton donor/acceptor is His181.

It belongs to the RNase T family. As to quaternary structure, homodimer. Mg(2+) is required as a cofactor.

Trims short 3' overhangs of a variety of RNA species, leaving a one or two nucleotide 3' overhang. Responsible for the end-turnover of tRNA: specifically removes the terminal AMP residue from uncharged tRNA (tRNA-C-C-A). Also appears to be involved in tRNA biosynthesis. The protein is Ribonuclease T of Cronobacter sakazakii (strain ATCC BAA-894) (Enterobacter sakazakii).